The sequence spans 315 residues: T-box transcription factor tbx-8 (315 aa).

Residues 11–195 constitute a DNA-binding region (T-box); sequence EDQDKLWNLF…FNPFAKGFRE (185 aa). Residues 193–203 are compositionally biased toward basic and acidic residues; it reads FREGSQSDRKR. 2 disordered regions span residues 193 to 235 and 293 to 315; these read FREG…SVSP and PPPS…INVV. A compositionally biased stretch (low complexity) spans 205–225; that stretch reads SPSADDSTTDESSSQVSSPQP. Over residues 305 to 315 the composition is skewed to acidic residues; sequence QEDIEQEINVV.

Its subcellular location is the nucleus. Transcription factor. Involved in the control of early morphogenesis of the intestine, hypodermis and body-wall muscle. Involved in regulating expression of vab-7. Appears to have partially redundant function to tbx-9. The chain is T-box transcription factor tbx-8 (tbx-8) from Caenorhabditis elegans.